The sequence spans 513 residues: ATP synthase subunit alpha 2 (513 aa).

Position 169 to 176 (169 to 176) interacts with ATP; it reads GDRQCGKT.

The protein belongs to the ATPase alpha/beta chains family. As to quaternary structure, F-type ATPases have 2 components, CF(1) - the catalytic core - and CF(0) - the membrane proton channel. CF(1) has five subunits: alpha(3), beta(3), gamma(1), delta(1), epsilon(1). CF(0) has three main subunits: a(1), b(2) and c(9-12). The alpha and beta chains form an alternating ring which encloses part of the gamma chain. CF(1) is attached to CF(0) by a central stalk formed by the gamma and epsilon chains, while a peripheral stalk is formed by the delta and b chains.

Its subcellular location is the cell inner membrane. It catalyses the reaction ATP + H2O + 4 H(+)(in) = ADP + phosphate + 5 H(+)(out). In terms of biological role, produces ATP from ADP in the presence of a proton gradient across the membrane. The alpha chain is a regulatory subunit. This is ATP synthase subunit alpha 2 from Paraburkholderia xenovorans (strain LB400).